Consider the following 735-residue polypeptide: NAD(P)H-quinone oxidoreductase subunit 5, chloroplastic (735 aa).

Helical transmembrane passes span 9 to 29 (WIIP…LLLF), 40 to 60 (WAFP…DLSI), 89 to 109 (IDSL…FVLI), 125 to 145 (FAYM…CNLI), 147 to 167 (IYIF…FWFT), 184 to 204 (IGDF…GSFE), 219 to 239 (NEVH…GAVA), 258 to 278 (TPIS…FLVA), 280 to 300 (LLPL…IGII), 327 to 347 (LGYM…FHLI), 354 to 374 (ALLF…VGYS), 396 to 416 (IAFL…CFWS), 425 to 445 (WLYS…TAFY), 540 to 560 (LFPM…AIPF), 600 to 620 (FSVS…KPFY), and 714 to 734 (FYLL…YFIL).

This sequence belongs to the complex I subunit 5 family. As to quaternary structure, NDH is composed of at least 16 different subunits, 5 of which are encoded in the nucleus.

The protein resides in the plastid. It localises to the chloroplast thylakoid membrane. The enzyme catalyses a plastoquinone + NADH + (n+1) H(+)(in) = a plastoquinol + NAD(+) + n H(+)(out). The catalysed reaction is a plastoquinone + NADPH + (n+1) H(+)(in) = a plastoquinol + NADP(+) + n H(+)(out). Functionally, NDH shuttles electrons from NAD(P)H:plastoquinone, via FMN and iron-sulfur (Fe-S) centers, to quinones in the photosynthetic chain and possibly in a chloroplast respiratory chain. The immediate electron acceptor for the enzyme in this species is believed to be plastoquinone. Couples the redox reaction to proton translocation, and thus conserves the redox energy in a proton gradient. The chain is NAD(P)H-quinone oxidoreductase subunit 5, chloroplastic (ndhF) from Gossypium hirsutum (Upland cotton).